The chain runs to 342 residues: Dihydroorotase (342 aa).

Residues His13 and His15 each contribute to the Zn(2+) site. Residues 15-17 (HLR) and Asn41 each bind substrate. Zn(2+) contacts are provided by Lys97, His134, and His172. Residue Lys97 is modified to N6-carboxylysine. His134 is a binding site for substrate. Leu217 lines the substrate pocket. Asp245 provides a ligand contact to Zn(2+). Asp245 is a catalytic residue. Substrate-binding residues include His249 and Ala261.

Belongs to the metallo-dependent hydrolases superfamily. DHOase family. Class II DHOase subfamily. In terms of assembly, homodimer. Zn(2+) serves as cofactor.

It catalyses the reaction (S)-dihydroorotate + H2O = N-carbamoyl-L-aspartate + H(+). It participates in pyrimidine metabolism; UMP biosynthesis via de novo pathway; (S)-dihydroorotate from bicarbonate: step 3/3. Its function is as follows. Catalyzes the reversible cyclization of carbamoyl aspartate to dihydroorotate. The chain is Dihydroorotase from Shewanella amazonensis (strain ATCC BAA-1098 / SB2B).